A 423-amino-acid chain; its full sequence is Tegument protein UL43 (423 aa).

The span at 1–12 (MEKTPAETTAVS) shows a compositional bias: polar residues. The disordered stretch occupies residues 1 to 46 (MEKTPAETTAVSAGNVPRDSIPCITNVSADTRGRTRPSRPATVPQR).

This sequence belongs to the herpesviridae US22 family.

The protein localises to the virion tegument. The chain is Tegument protein UL43 (UL43) from Homo sapiens (Human).